The sequence spans 61 residues: uncharacterized protein (61 aa).

This is an uncharacterized protein from Acidianus bottle-shaped virus (isolate Italy/Pozzuoli) (ABV).